The chain runs to 1006 residues: E3 ubiquitin-protein ligase MIB1 (1006 aa).

The 69-residue stretch at 6-74 (NNRVMVEGVG…AYDLRILDSA (69 aa)) folds into the MIB/HERC2 1 domain. The ZZ-type zinc finger occupies 80-132 (HDGTMCDTCRQQPIIGIRWKCAECTNYDLCTVCYHGDKHHLRHRFYRITTPGS). Positions 85, 88, 100, 103, 109, 112, 118, and 122 each coordinate Zn(2+). The MIB/HERC2 2 domain occupies 143–221 (SKKITARGIF…MSDLKCVQDA (79 aa)). Phosphoserine is present on Ser-408. ANK repeat units follow at residues 430–460 (DLNE…DVNG), 463–492 (AGHT…DVEA), 496–525 (DGDR…DLNA), 529–558 (RRQT…HPSL), 562–591 (EGDT…DVTI), 595–627 (NGFN…IVDE), 631–661 (DGYT…NLDI), 665–694 (NQQT…KLDI), and 698–729 (DGDT…KVDA). RING-type zinc fingers lie at residues 819 to 854 (CMVC…LICK) and 866 to 901 (CVVC…VQCR). The stretch at 935–962 (QKDKDNTNVNADVQKLQQQLQDIKEQTM) forms a coiled coil. Residues 963–996 (CPVCLDRLKNMIFLCGHGTCQLCGDRMSECPICR) form an RING-type 3 zinc finger.

Interacts with CEP131 and PCM1. Post-translationally, ubiquitinated; this modification is inhibited in response to cellular stress, such as ultraviolet light (UV) radiation or heat shock. Ubiquitinated; possibly via autoubiquitination. Detected in all tissues tested. Present in embryo, embryonic stem cells, bladder, skeletal muscle, bladder, uterus, testis, stomach, colon, ileum, trachea, lung, aorta, kidney, spleen, liver and vas deferens (at protein level). Highly expressed in testis.

The protein resides in the cytoplasm. The protein localises to the cytoskeleton. Its subcellular location is the microtubule organizing center. It is found in the centrosome. It localises to the centriolar satellite. The protein resides in the cell membrane. The enzyme catalyses S-ubiquitinyl-[E2 ubiquitin-conjugating enzyme]-L-cysteine + [acceptor protein]-L-lysine = [E2 ubiquitin-conjugating enzyme]-L-cysteine + N(6)-ubiquitinyl-[acceptor protein]-L-lysine.. It participates in protein modification; protein ubiquitination. Functionally, E3 ubiquitin-protein ligase that mediates ubiquitination of Delta receptors, which act as ligands of Notch proteins. Positively regulates the Delta-mediated Notch signaling by ubiquitinating the intracellular domain of Delta, leading to endocytosis of Delta receptors. Involved in ubiquitination of centriolar satellite CEP131, CEP290 and PCM1 proteins and hence inhibits primary cilium formation in proliferating cells. Mediates 'Lys-63'-linked polyubiquitination of TBK1, which probably participates in kinase activation. Probably mediates ubiquitination and subsequent proteasomal degradation of DAPK1, thereby antagonizing anti-apoptotic effects of DAPK1 to promote TNF-induced apoptosis. The polypeptide is E3 ubiquitin-protein ligase MIB1 (Mib1) (Mus musculus (Mouse)).